The sequence spans 339 residues: Arylacetonitrilase (339 aa).

The region spanning 5 to 290 is the CN hydrolase domain; that stretch reads IRVAVTQAEP…EGIVYADLDL (286 aa). The Proton acceptor role is filled by E45. Residue K126 is part of the active site. The active-site Nucleophile is the C167.

This sequence belongs to the carbon-nitrogen hydrolase superfamily. Nitrilase family.

It catalyses the reaction a nitrile + 2 H2O = a carboxylate + NH4(+). The catalysed reaction is 4-chlorophenylacetonitrile + 2 H2O = 4-chlorophenylacetate + NH4(+). Functionally, nitrilase that hydrolyzes preferentially phenylacetonitrile, (R,S)-mandelonitrile, and 3-indolylacetonitrile. This is Arylacetonitrilase from Fusarium vanettenii (strain ATCC MYA-4622 / CBS 123669 / FGSC 9596 / NRRL 45880 / 77-13-4) (Fusarium solani subsp. pisi).